Consider the following 399-residue polypeptide: MTESRSHSRRVWIKADSDVGDWKTRKRRITTGLEAGVDCVLVDPEDISRVQSLGDVSIAAFTSTADSETDSSAETEGVEEADTVVIGKESESDGTDDFPETLSASADLSAIETHSNNTVVETGAYIRILSEEYEALAETAAADASYTIVIGEDWTIIPLENLIARIGSETTLIAGVTSAEEAQTAFETLEIGADGVLLDTDDPDEIRETVAVRDATERETLELEWATVIDIERAGMADRVCVDTANLMQHNEGMLIGSMSRGLIFVHAETAESPYIASRPFRVNAGAVHAYLRTPDGGTAYLSELQSGDTVQVVNTDGQTREAIVGRVKIEKRPMFRIELEYDDDRVETLLQNAETIKVNTQSGRTAVTDLESGDEIRLFYEETARHFGEAVEESIIEK.

It belongs to the archaeal-type DHQ synthase family.

The enzyme catalyses 2-amino-2,3,7-trideoxy-D-lyxo-hept-6-ulosonate + NAD(+) + H2O = 3-dehydroquinate + NH4(+) + NADH + H(+). In terms of biological role, catalyzes the oxidative deamination and cyclization of 2-amino-3,7-dideoxy-D-threo-hept-6-ulosonic acid (ADH) to yield 3-dehydroquinate (DHQ), which is fed into the canonical shikimic pathway of aromatic amino acid biosynthesis. The chain is 3-dehydroquinate synthase from Haloquadratum walsbyi (strain DSM 16790 / HBSQ001).